Reading from the N-terminus, the 327-residue chain is Serine/threonine-protein phosphatase PP2A catalytic subunit (327 aa).

4 residues coordinate Mn(2+): D75, H77, D103, and N135. H136 acts as the Proton donor in catalysis. Mn(2+) is bound by residues H185 and H259. L327 carries the leucine methyl ester modification.

Belongs to the PPP phosphatase family. PP-2A subfamily. It depends on Mn(2+) as a cofactor.

The catalysed reaction is O-phospho-L-seryl-[protein] + H2O = L-seryl-[protein] + phosphate. It carries out the reaction O-phospho-L-threonyl-[protein] + H2O = L-threonyl-[protein] + phosphate. The chain is Serine/threonine-protein phosphatase PP2A catalytic subunit (pph-1) from Neurospora crassa (strain ATCC 24698 / 74-OR23-1A / CBS 708.71 / DSM 1257 / FGSC 987).